Consider the following 469-residue polypeptide: Argininosuccinate lyase (469 aa).

The protein belongs to the lyase 1 family. Argininosuccinate lyase subfamily.

The protein localises to the cytoplasm. The catalysed reaction is 2-(N(omega)-L-arginino)succinate = fumarate + L-arginine. Its pathway is amino-acid biosynthesis; L-arginine biosynthesis; L-arginine from L-ornithine and carbamoyl phosphate: step 3/3. The polypeptide is Argininosuccinate lyase (Burkholderia lata (strain ATCC 17760 / DSM 23089 / LMG 22485 / NCIMB 9086 / R18194 / 383)).